A 511-amino-acid chain; its full sequence is Rab proteins geranylgeranyltransferase component A (511 aa).

It belongs to the Rab GDI family.

It is found in the cytoplasm. Its subcellular location is the perinuclear region. The protein localises to the cytoskeleton. It localises to the spindle pole. Its function is as follows. Binds unprenylated Rab proteins, presents it to the catalytic component B, and remains bound to it after the geranylgeranyl transfer reaction. The component A is thought to be regenerated by transferring its prenylated Rab to a protein acceptor. In Drosophila melanogaster (Fruit fly), this protein is Rab proteins geranylgeranyltransferase component A.